A 208-amino-acid chain; its full sequence is Imidazoleglycerol-phosphate dehydratase (208 aa).

The protein belongs to the imidazoleglycerol-phosphate dehydratase family.

Its subcellular location is the cytoplasm. It carries out the reaction D-erythro-1-(imidazol-4-yl)glycerol 3-phosphate = 3-(imidazol-4-yl)-2-oxopropyl phosphate + H2O. It functions in the pathway amino-acid biosynthesis; L-histidine biosynthesis; L-histidine from 5-phospho-alpha-D-ribose 1-diphosphate: step 6/9. In Symbiobacterium thermophilum (strain DSM 24528 / JCM 14929 / IAM 14863 / T), this protein is Imidazoleglycerol-phosphate dehydratase.